Here is a 142-residue protein sequence, read N- to C-terminus: Hemoglobin subunit alpha (142 aa).

Residues 2–142 (VLSAADKGNV…VSTVLTSKYR (141 aa)) form the Globin domain. S4 is subject to Phosphoserine. N6-succinyllysine is present on residues K8 and K12. Residue K17 is modified to N6-acetyllysine; alternate. Position 17 is an N6-succinyllysine; alternate (K17). Y25 bears the Phosphotyrosine mark. The residue at position 36 (S36) is a Phosphoserine. K41 carries the post-translational modification N6-succinyllysine. Residue S50 is modified to Phosphoserine. H59 lines the O2 pocket. H88 contacts heme b. S103 bears the Phosphoserine mark. The residue at position 109 (T109) is a Phosphothreonine. Position 125 is a phosphoserine (S125). 2 positions are modified to phosphothreonine: T135 and T138. S139 carries the phosphoserine modification.

It belongs to the globin family. As to quaternary structure, heterotetramer of two alpha chains and two beta chains. Red blood cells.

In terms of biological role, involved in oxygen transport from the lung to the various peripheral tissues. Its function is as follows. Hemopressin acts as an antagonist peptide of the cannabinoid receptor CNR1. Hemopressin-binding efficiently blocks cannabinoid receptor CNR1 and subsequent signaling. The sequence is that of Hemoglobin subunit alpha (HBA) from Bos taurus (Bovine).